The sequence spans 300 residues: Glutamyl-Q tRNA(Asp) synthetase (300 aa).

Residues arginine 14 to threonine 18 and glutamate 50 each bind L-glutamate. Positions proline 17–serine 27 match the 'HIGH' region motif. Positions 106, 108, 120, and 124 each coordinate Zn(2+). L-glutamate contacts are provided by tyrosine 177 and arginine 195. A 'KMSKS' region motif is present at residues lysine 233–serine 237. Lysine 236 serves as a coordination point for ATP.

It belongs to the class-I aminoacyl-tRNA synthetase family. GluQ subfamily. Zn(2+) serves as cofactor.

In terms of biological role, catalyzes the tRNA-independent activation of glutamate in presence of ATP and the subsequent transfer of glutamate onto a tRNA(Asp). Glutamate is transferred on the 2-amino-5-(4,5-dihydroxy-2-cyclopenten-1-yl) moiety of the queuosine in the wobble position of the QUC anticodon. The chain is Glutamyl-Q tRNA(Asp) synthetase from Pseudomonas putida (strain ATCC 47054 / DSM 6125 / CFBP 8728 / NCIMB 11950 / KT2440).